We begin with the raw amino-acid sequence, 296 residues long: Transposase for insertion sequence element IS629 (296 aa).

The 161-residue stretch at 125-285 (VAERPDQLWV…TPPAEAEKAY (161 aa)) folds into the Integrase catalytic domain.

Its function is as follows. Involved in the transposition of the insertion sequence. This Shigella sonnei protein is Transposase for insertion sequence element IS629.